The sequence spans 339 residues: DNA-directed RNA polymerase subunit alpha (339 aa).

Positions Met-1–Asp-238 are alpha N-terminal domain (alpha-NTD). The segment at Val-250–Val-339 is alpha C-terminal domain (alpha-CTD).

Belongs to the RNA polymerase alpha chain family. In terms of assembly, homodimer. The RNAP catalytic core consists of 2 alpha, 1 beta, 1 beta' and 1 omega subunit. When a sigma factor is associated with the core the holoenzyme is formed, which can initiate transcription.

It carries out the reaction RNA(n) + a ribonucleoside 5'-triphosphate = RNA(n+1) + diphosphate. In terms of biological role, DNA-dependent RNA polymerase catalyzes the transcription of DNA into RNA using the four ribonucleoside triphosphates as substrates. The protein is DNA-directed RNA polymerase subunit alpha of Anaeromyxobacter dehalogenans (strain 2CP-C).